We begin with the raw amino-acid sequence, 582 residues long: Pre-hexon-linking protein IIIa (582 aa).

The tract at residues 1 to 114 (MQRPAIIAER…ALLERVARYN (114 aa)) is peripentonal hexon-tethering domain. The tract at residues 146–259 (GSLVALNAFL…FTNTNSLSRD (114 aa)) is binding to hexon-linking protein. Ser233 is subject to Phosphoserine; by host. Thr282 carries the phosphothreonine; by host modification. Residues 437–479 (GKKEAGDEGPLLDSRASSPFPSLTSLPASVNSGRTTRPRLTGE) are disordered. Positions 451-471 (RASSPFPSLTSLPASVNSGRT) are enriched in polar residues. Ser458 and Ser465 each carry phosphoserine; by host. Tyr482 carries the phosphotyrosine; by host modification. Ser503 carries the phosphoserine; by host modification. Basic and acidic residues predominate over residues 517–526 (ERREWEERQP). Positions 517–582 (ERREWEERQP…RPQGCIGSLY (66 aa)) are disordered. Basic residues predominate over residues 530 to 543 (RPPRQRWQRRKKGA). The propeptide occupies 566–582 (GNPFAHLRPQGCIGSLY).

The protein belongs to the adenoviridae hexon-linking protein IIIa family. Interacts with hexon proteins; this interaction tethers the peripentonal hexons to hexons situated in the facet. Interacts with the penton protein (via N-terminus). Interacts with packaging protein 3; this interaction is required to promote correct genome packaging. Post-translationally, cleaved near the C-terminus by the viral protease during virion maturation to form the mature protein.

It localises to the virion. The protein resides in the host nucleus. In terms of biological role, structural component of the virion that acts as a cement protein on the capsid exterior which mediates the interactions between the hexons, including the peripentonal hexons, and reaches all the way to the penton vertices. Two hexon linking proteins IIIa, one from each facet, stabilize the unique edge interface between a pair of facets. As the virus enters the host cell, hexon linking proteins IIIa are shed concomitant with virion acidification in the endosome. During virus assembly, seems to play a role in the serotype specificity of the packaging of viral DNA via its interaction with packaging protein 3. The protein is Pre-hexon-linking protein IIIa of Human adenovirus A serotype 12 (HAdV-12).